Consider the following 189-residue polypeptide: Pyridoxal 5'-phosphate synthase subunit PdxT (189 aa).

50 to 52 (GES) provides a ligand contact to L-glutamine. The active-site Nucleophile is cysteine 80. Residues arginine 107 and 134-135 (IR) each bind L-glutamine. Residues histidine 169 and glutamate 171 each act as charge relay system in the active site.

It belongs to the glutaminase PdxT/SNO family. As to quaternary structure, in the presence of PdxS, forms a dodecamer of heterodimers. Only shows activity in the heterodimer.

It carries out the reaction aldehydo-D-ribose 5-phosphate + D-glyceraldehyde 3-phosphate + L-glutamine = pyridoxal 5'-phosphate + L-glutamate + phosphate + 3 H2O + H(+). The catalysed reaction is L-glutamine + H2O = L-glutamate + NH4(+). The protein operates within cofactor biosynthesis; pyridoxal 5'-phosphate biosynthesis. Its function is as follows. Catalyzes the hydrolysis of glutamine to glutamate and ammonia as part of the biosynthesis of pyridoxal 5'-phosphate. The resulting ammonia molecule is channeled to the active site of PdxS. The protein is Pyridoxal 5'-phosphate synthase subunit PdxT of Picrophilus torridus (strain ATCC 700027 / DSM 9790 / JCM 10055 / NBRC 100828 / KAW 2/3).